Reading from the N-terminus, the 86-residue chain is Acyl carrier protein (86 aa).

Residues 7–85 (SKVDNIEQKV…DVVNYIKEHK (79 aa)) form the Carrier domain. S45 is subject to O-(pantetheine 4'-phosphoryl)serine.

It belongs to the acyl carrier protein (ACP) family. Post-translationally, 4'-phosphopantetheine is transferred from CoA to a specific serine of apo-ACP by AcpS. This modification is essential for activity because fatty acids are bound in thioester linkage to the sulfhydryl of the prosthetic group.

It localises to the cytoplasm. The protein operates within lipid metabolism; fatty acid biosynthesis. Functionally, carrier of the growing fatty acid chain in fatty acid biosynthesis. In Rickettsia bellii (strain RML369-C), this protein is Acyl carrier protein.